Consider the following 185-residue polypeptide: MGVSTPVIVPRGGAPVPPGPDQDLILGQVAREIEEKGFVLSNVDSLVNWARAGSLWPMTFGLACCALEMIHCACARYDLDRFGTVFRPSPRQSDVMIVAGTLTNKMAPALRKVYDQMAEPRWVISMGSCANGGGYYHYSYSVVRGCDRIVPVDIYVPGCPPTSEALLYGVLQLQKKIKRTGALYR.

4 residues coordinate [4Fe-4S] cluster: Cys-64, Cys-65, Cys-129, and Cys-159.

The protein belongs to the complex I 20 kDa subunit family. NDH-1 is composed of 14 different subunits. Subunits NuoB, C, D, E, F, and G constitute the peripheral sector of the complex. [4Fe-4S] cluster serves as cofactor.

The protein resides in the cell inner membrane. It catalyses the reaction a quinone + NADH + 5 H(+)(in) = a quinol + NAD(+) + 4 H(+)(out). Its function is as follows. NDH-1 shuttles electrons from NADH, via FMN and iron-sulfur (Fe-S) centers, to quinones in the respiratory chain. Couples the redox reaction to proton translocation (for every two electrons transferred, four hydrogen ions are translocated across the cytoplasmic membrane), and thus conserves the redox energy in a proton gradient. The protein is NADH-quinone oxidoreductase subunit B of Rhodospirillum rubrum (strain ATCC 11170 / ATH 1.1.1 / DSM 467 / LMG 4362 / NCIMB 8255 / S1).